A 272-amino-acid polypeptide reads, in one-letter code: HMP-PP phosphatase (272 aa).

Aspartate 8 acts as the Nucleophile in catalysis. Aspartate 8, aspartate 10, and aspartate 212 together coordinate Mg(2+).

This sequence belongs to the HAD-like hydrolase superfamily. Cof family. It depends on Mg(2+) as a cofactor.

It catalyses the reaction 4-amino-2-methyl-5-(diphosphooxymethyl)pyrimidine + H2O = 4-amino-2-methyl-5-(phosphooxymethyl)pyrimidine + phosphate + H(+). Catalyzes the hydrolysis of 4-amino-2-methyl-5-hydroxymethylpyrimidine pyrophosphate (HMP-PP) to 4-amino-2-methyl-5-hydroxymethylpyrimidine phosphate (HMP-P). This is HMP-PP phosphatase from Shigella flexneri serotype 5b (strain 8401).